A 272-amino-acid chain; its full sequence is uncharacterized protein (272 aa).

NAD(+) contacts are provided by residues 12–34 (FITG…DGAN), 39–40 (DI), 77–78 (DV), and Asn104. A substrate-binding site is contributed by Ser153. The active-site Proton acceptor is the Tyr170. Residues Lys174 and 203–205 (VDT) each bind NAD(+).

The protein belongs to the short-chain dehydrogenases/reductases (SDR) family.

This is an uncharacterized protein from Mycobacterium tuberculosis (strain CDC 1551 / Oshkosh).